Here is a 291-residue protein sequence, read N- to C-terminus: MLRPRGAEGTAVALLRLLLLLLLLGPKLRGPGLGVVGAAGAGLPESVIWAVNAGGEAHVDVHGIHFRKDPLEGRVGRASDYGMKLPILRSTPEDQILYQTERYNEETFGYEVPVKEEGDYVLVLKFAEVYFAQSQQKVFDVRLNGHVVVKDLDIFDRVGHSTAHDEIIPMSIRKGKLSVRGEVSTFTGKLYIEFVKGYYDNPKVCALYILAGTVDDVPKLQPHPGLEKKEEEEEEEEYDEGSNLKRQTNKNRVQSGPRTPNPYASDNSSLMFPILVAFGVFIPTLFCLCRL.

Residues M1–G30 form the signal peptide. Residues P31–S268 lie on the Lumenal side of the membrane. The a carbohydrate site is built by Y81, Y103, Y130, F131, and D200. The segment at L220–A264 is disordered. A compositionally biased stretch (acidic residues) spans E230 to E240. Polar residues predominate over residues L244–A264. N267 is a glycosylation site (N-linked (GlcNAc...) asparagine). The chain crosses the membrane as a helical span at residues S269–C289. At R290–L291 the chain is on the cytoplasmic side.

The protein belongs to the malectin family. Interacts with the oligosaccharyltransferase (OST) complex.

Its subcellular location is the endoplasmic reticulum membrane. Its function is as follows. Carbohydrate-binding protein with a strong ligand preference for Glc2-N-glycan. May play a role in the early steps of protein N-glycosylation. This chain is Malectin, found in Mus musculus (Mouse).